Reading from the N-terminus, the 495-residue chain is 4-aminobutyrate aminotransferase (495 aa).

Residue 160-161 (GS) coordinates pyridoxal 5'-phosphate. Residue R216 participates in substrate binding. K350 is modified (N6-(pyridoxal phosphate)lysine). Residue T374 coordinates pyridoxal 5'-phosphate.

It belongs to the class-III pyridoxal-phosphate-dependent aminotransferase family. As to quaternary structure, homodimer. Pyridoxal 5'-phosphate serves as cofactor.

The catalysed reaction is 4-aminobutanoate + 2-oxoglutarate = succinate semialdehyde + L-glutamate. This chain is 4-aminobutyrate aminotransferase (gabT), found in Dictyostelium discoideum (Social amoeba).